The chain runs to 363 residues: S-adenosylmethionine:tRNA ribosyltransferase-isomerase (363 aa).

Belongs to the QueA family. As to quaternary structure, monomer.

Its subcellular location is the cytoplasm. The enzyme catalyses 7-aminomethyl-7-carbaguanosine(34) in tRNA + S-adenosyl-L-methionine = epoxyqueuosine(34) in tRNA + adenine + L-methionine + 2 H(+). Its pathway is tRNA modification; tRNA-queuosine biosynthesis. Functionally, transfers and isomerizes the ribose moiety from AdoMet to the 7-aminomethyl group of 7-deazaguanine (preQ1-tRNA) to give epoxyqueuosine (oQ-tRNA). The polypeptide is S-adenosylmethionine:tRNA ribosyltransferase-isomerase (Pasteurella multocida (strain Pm70)).